The sequence spans 111 residues: uncharacterized protein (111 aa).

The chain crosses the membrane as a helical span at residues 81–101 (YFFLLFYVSFPHIFLGLFFFI).

The protein localises to the membrane. This is an uncharacterized protein from Schizosaccharomyces pombe (strain 972 / ATCC 24843) (Fission yeast).